We begin with the raw amino-acid sequence, 41 residues long: MKIKNSLKALKARHRDCQLVRRKGRVYIINKTAPRFKARQG.

This sequence belongs to the bacterial ribosomal protein bL36 family.

The polypeptide is Large ribosomal subunit protein bL36 (Brucella abortus (strain S19)).